Reading from the N-terminus, the 1767-residue chain is Endo-alpha-N-acetylgalactosaminidase (1767 aa).

Positions 1 to 39 (MNKGLFEKRCKYSIRKFSLGVASVMIGATFFGTSPVLAD) are cleaved as a signal peptide. Basic and acidic residues-rich tracts occupy residues 63–75 (NDGHDFEAPKVGE) and 84–111 (DGPKTEEELLALEKEKPAEEKPKEDKPA). 2 disordered regions span residues 63–137 (NDGH…QGTV) and 301–324 (VKTDNQEGVKTEDTPAEKETGPEV). Low complexity predominate over residues 112–124 (AAKPETPKTVTPE). Basic and acidic residues-rich tracts occupy residues 127–137 (TVEKKEQQGTV) and 304–324 (DNQEGVKTEDTPAEKETGPEV). Residues aspartate 577, asparagine 579, aspartate 581, lysine 583, and aspartate 588 each contribute to the Ca(2+) site. A catalytic region spans residues 602 to 893 (GWKKVKDITA…DVMTKYFQHF (292 aa)). Substrate is bound at residue aspartate 658. Catalysis depends on aspartate 764, which acts as the Nucleophile. Catalysis depends on glutamate 796, which acts as the Proton donor/acceptor. Ca(2+) contacts are provided by aspartate 1233, glutamate 1235, glutamate 1281, tryptophan 1284, and aspartate 1411. Residues 1735-1739 (LPATG) carry the LPXTG sorting signal motif. Threonine 1738 is subject to Pentaglycyl murein peptidoglycan amidated threonine. Residues 1739–1767 (GESQFDTALFLASVSLALSALFVVKTKKD) constitute a propeptide, removed by sortase.

This sequence belongs to the glycosyl hydrolase 101 family. A subfamily.

The protein localises to the secreted. The protein resides in the cell wall. The catalysed reaction is a 3-O-[beta-D-galactosyl-(1-&gt;3)-N-acetyl-alpha-D-galactosaminyl]-L-threonyl-[protein] + H2O = beta-D-galactosyl-(1-&gt;3)-N-acetyl-D-galactosamine + L-threonyl-[protein]. It catalyses the reaction a 3-O-[beta-D-galactosyl-(1-&gt;3)-N-acetyl-alpha-D-galactosaminyl]-L-seryl-[protein] + H2O = beta-D-galactosyl-(1-&gt;3)-N-acetyl-D-galactosamine + L-seryl-[protein]. In terms of biological role, involved in the breakdown of mucin-type O-linked glycans. Specifically removes the T-antigen disaccharide (Gal-beta-1,3-GalNAc-alpha) from extracellular host glycoproteins. Representative of a broadly important class of virulence factors. The protein is Endo-alpha-N-acetylgalactosaminidase of Streptococcus pneumoniae (strain ATCC BAA-255 / R6).